Consider the following 320-residue polypeptide: Acetyl-coenzyme A carboxylase carboxyl transferase subunit alpha (320 aa).

The 254-residue stretch at 42–295 (IEEKAVQALN…GDAIAAAFAE (254 aa)) folds into the CoA carboxyltransferase C-terminal domain.

It belongs to the AccA family. Acetyl-CoA carboxylase is a heterohexamer composed of biotin carboxyl carrier protein (AccB), biotin carboxylase (AccC) and two subunits each of ACCase subunit alpha (AccA) and ACCase subunit beta (AccD).

It is found in the cytoplasm. The enzyme catalyses N(6)-carboxybiotinyl-L-lysyl-[protein] + acetyl-CoA = N(6)-biotinyl-L-lysyl-[protein] + malonyl-CoA. Its pathway is lipid metabolism; malonyl-CoA biosynthesis; malonyl-CoA from acetyl-CoA: step 1/1. Component of the acetyl coenzyme A carboxylase (ACC) complex. First, biotin carboxylase catalyzes the carboxylation of biotin on its carrier protein (BCCP) and then the CO(2) group is transferred by the carboxyltransferase to acetyl-CoA to form malonyl-CoA. This chain is Acetyl-coenzyme A carboxylase carboxyl transferase subunit alpha, found in Rhodopseudomonas palustris (strain HaA2).